We begin with the raw amino-acid sequence, 561 residues long: Carboxylesterase 4A (561 aa).

An N-terminal signal peptide occupies residues 1–20 (MRWILCWSLTLCLMAQTALG). A disulfide bond links C88 and C116. N214 is a glycosylation site (N-linked (GlcNAc...) asparagine). S221 (acyl-ester intermediate) is an active-site residue. A disulfide bond links C273 and C284. N-linked (GlcNAc...) asparagine glycosylation is present at N276. E353 acts as the Charge relay system in catalysis. A glycan (N-linked (GlcNAc...) asparagine) is linked at N388. H467 functions as the Charge relay system in the catalytic mechanism.

Belongs to the type-B carboxylesterase/lipase family.

It localises to the secreted. In terms of biological role, probable carboxylesterase. This Homo sapiens (Human) protein is Carboxylesterase 4A (CES4A).